The chain runs to 516 residues: MLKLAPTPSDDPVLRLTGITKTFPGVKALNAVSLELYPGEVTALIGENGAGKSTIVKVLTGIYRADGGEITVDGEPVNFTSAEDATAAGITAIHQETVLFDELSVAENIFIGHAPRGRFGLIDTSTMIARAQEILDRIDAPLRATTPLKDLGIANKHLVAIARALSVDARVVIMDEPTAALSQKEIEELYELVDRLKAEGRAILFISHKFDEVFRIADRYAVFRDGEHVGAGLMADVNEGDLVQLMVGRAVDQIFPERDHAKGAEVLRVEGYAHPTEFDDISLTLHAGEILGFYGLVGAGRSELMQAIFGITKPSAGTIQIAGEARTIGSPAQAIENGIVYVPEDRGQQGAVLGLPIFQNVTLPSLSQTSRGGFLKLAAEFALARDYTERLELRAAALDQDVGNLSGGNQQKVVIAKWLATKPRVIILDEPTKGIDIGSKAAVHAFMAELAAEGLAVIMVSSEIPEILGMSDRVIVMREGLIAAELDRADLSPEVLVRHAAGIGPKVHENEMEERP.

ABC transporter domains are found at residues Leu14–Ala250 and Ala261–Gly504. Gly46 to Ser53 is a binding site for ATP.

This sequence belongs to the ABC transporter superfamily. Ribose importer (TC 3.A.1.2.1) family. The complex is composed of an ATP-binding protein (RbsA), two transmembrane proteins (RbsC) and a solute-binding protein (RbsB).

The protein resides in the cell inner membrane. The enzyme catalyses D-ribose(out) + ATP + H2O = D-ribose(in) + ADP + phosphate + H(+). Part of the ABC transporter complex RbsABC involved in ribose import. Responsible for energy coupling to the transport system. The polypeptide is Ribose import ATP-binding protein RbsA (Jannaschia sp. (strain CCS1)).